A 190-amino-acid chain; its full sequence is Xanthine phosphoribosyltransferase (190 aa).

Xanthine contacts are provided by Leu20 and Asn27. 5-phospho-alpha-D-ribose 1-diphosphate is bound at residue 129-133; it reads ASGSA. Lys157 serves as a coordination point for xanthine.

The protein belongs to the purine/pyrimidine phosphoribosyltransferase family. Xpt subfamily. In terms of assembly, homodimer.

Its subcellular location is the cytoplasm. The enzyme catalyses XMP + diphosphate = xanthine + 5-phospho-alpha-D-ribose 1-diphosphate. The protein operates within purine metabolism; XMP biosynthesis via salvage pathway; XMP from xanthine: step 1/1. Converts the preformed base xanthine, a product of nucleic acid breakdown, to xanthosine 5'-monophosphate (XMP), so it can be reused for RNA or DNA synthesis. In Clostridium tetani (strain Massachusetts / E88), this protein is Xanthine phosphoribosyltransferase.